A 366-amino-acid chain; its full sequence is uncharacterized protein (366 aa).

The protein to B.subtilis XkdV.

This is an uncharacterized protein from Bacillus subtilis (strain 168).